The sequence spans 1389 residues: DNA-directed RNA polymerase subunit beta'' (1389 aa).

4 residues coordinate Zn(2+): Cys224, Cys295, Cys302, and Cys305.

It belongs to the RNA polymerase beta' chain family. RpoC2 subfamily. In plastids the minimal PEP RNA polymerase catalytic core is composed of four subunits: alpha, beta, beta', and beta''. When a (nuclear-encoded) sigma factor is associated with the core the holoenzyme is formed, which can initiate transcription. Zn(2+) is required as a cofactor.

The protein localises to the plastid. Its subcellular location is the chloroplast. The catalysed reaction is RNA(n) + a ribonucleoside 5'-triphosphate = RNA(n+1) + diphosphate. DNA-dependent RNA polymerase catalyzes the transcription of DNA into RNA using the four ribonucleoside triphosphates as substrates. The sequence is that of DNA-directed RNA polymerase subunit beta'' from Atropa belladonna (Belladonna).